Here is a 493-residue protein sequence, read N- to C-terminus: Glutamate--tRNA ligase (493 aa).

The 'HIGH' region motif lies at 9–19; it reads PSPTGFVHIGS. Residues 258–262 carry the 'KMSKS' region motif; that stretch reads KLSKR. Lys-261 contributes to the ATP binding site.

This sequence belongs to the class-I aminoacyl-tRNA synthetase family. Glutamate--tRNA ligase type 1 subfamily. In terms of assembly, monomer.

Its subcellular location is the cytoplasm. It catalyses the reaction tRNA(Glu) + L-glutamate + ATP = L-glutamyl-tRNA(Glu) + AMP + diphosphate. In terms of biological role, catalyzes the attachment of glutamate to tRNA(Glu) in a two-step reaction: glutamate is first activated by ATP to form Glu-AMP and then transferred to the acceptor end of tRNA(Glu). In Clostridioides difficile (strain 630) (Peptoclostridium difficile), this protein is Glutamate--tRNA ligase.